A 284-amino-acid polypeptide reads, in one-letter code: 4-hydroxy-3-methylbut-2-enyl diphosphate reductase (284 aa).

Cys-12 is a [4Fe-4S] cluster binding site. The (2E)-4-hydroxy-3-methylbut-2-enyl diphosphate site is built by His-40 and His-76. Positions 40 and 76 each coordinate dimethylallyl diphosphate. His-40 and His-76 together coordinate isopentenyl diphosphate. Position 98 (Cys-98) interacts with [4Fe-4S] cluster. His-126 serves as a coordination point for (2E)-4-hydroxy-3-methylbut-2-enyl diphosphate. His-126 lines the dimethylallyl diphosphate pocket. His-126 serves as a coordination point for isopentenyl diphosphate. The active-site Proton donor is Glu-128. Thr-161 provides a ligand contact to (2E)-4-hydroxy-3-methylbut-2-enyl diphosphate. Cys-191 contacts [4Fe-4S] cluster. Ser-219, Ser-220, Asn-221, and Ser-263 together coordinate (2E)-4-hydroxy-3-methylbut-2-enyl diphosphate. Dimethylallyl diphosphate-binding residues include Ser-219, Ser-220, Asn-221, and Ser-263. Residues Ser-219, Ser-220, Asn-221, and Ser-263 each coordinate isopentenyl diphosphate.

It belongs to the IspH family. It depends on [4Fe-4S] cluster as a cofactor.

It carries out the reaction isopentenyl diphosphate + 2 oxidized [2Fe-2S]-[ferredoxin] + H2O = (2E)-4-hydroxy-3-methylbut-2-enyl diphosphate + 2 reduced [2Fe-2S]-[ferredoxin] + 2 H(+). The catalysed reaction is dimethylallyl diphosphate + 2 oxidized [2Fe-2S]-[ferredoxin] + H2O = (2E)-4-hydroxy-3-methylbut-2-enyl diphosphate + 2 reduced [2Fe-2S]-[ferredoxin] + 2 H(+). The protein operates within isoprenoid biosynthesis; dimethylallyl diphosphate biosynthesis; dimethylallyl diphosphate from (2E)-4-hydroxy-3-methylbutenyl diphosphate: step 1/1. It participates in isoprenoid biosynthesis; isopentenyl diphosphate biosynthesis via DXP pathway; isopentenyl diphosphate from 1-deoxy-D-xylulose 5-phosphate: step 6/6. In terms of biological role, catalyzes the conversion of 1-hydroxy-2-methyl-2-(E)-butenyl 4-diphosphate (HMBPP) into a mixture of isopentenyl diphosphate (IPP) and dimethylallyl diphosphate (DMAPP). Acts in the terminal step of the DOXP/MEP pathway for isoprenoid precursor biosynthesis. The chain is 4-hydroxy-3-methylbut-2-enyl diphosphate reductase from Petrotoga mobilis (strain DSM 10674 / SJ95).